A 676-amino-acid chain; its full sequence is tRNA 5-methylaminomethyl-2-thiouridine biosynthesis bifunctional protein MnmC (676 aa).

Positions 1–241 (MFTVTPAKIY…KRECLCGIKN (241 aa)) are tRNA (mnm(5)s(2)U34)-methyltransferase. Positions 268–676 (IGGGIASLFT…RKLLKGTEIK (409 aa)) are FAD-dependent cmnm(5)s(2)U34 oxidoreductase.

In the N-terminal section; belongs to the methyltransferase superfamily. tRNA (mnm(5)s(2)U34)-methyltransferase family. It in the C-terminal section; belongs to the DAO family. FAD is required as a cofactor.

Its subcellular location is the cytoplasm. The enzyme catalyses 5-aminomethyl-2-thiouridine(34) in tRNA + S-adenosyl-L-methionine = 5-methylaminomethyl-2-thiouridine(34) in tRNA + S-adenosyl-L-homocysteine + H(+). Its function is as follows. Catalyzes the last two steps in the biosynthesis of 5-methylaminomethyl-2-thiouridine (mnm(5)s(2)U) at the wobble position (U34) in tRNA. Catalyzes the FAD-dependent demodification of cmnm(5)s(2)U34 to nm(5)s(2)U34, followed by the transfer of a methyl group from S-adenosyl-L-methionine to nm(5)s(2)U34, to form mnm(5)s(2)U34. The sequence is that of tRNA 5-methylaminomethyl-2-thiouridine biosynthesis bifunctional protein MnmC from Histophilus somni (strain 129Pt) (Haemophilus somnus).